The primary structure comprises 275 residues: Undecaprenyl-diphosphatase (275 aa).

8 consecutive transmembrane segments (helical) span residues 1 to 21 (MDWV…FLPI), 42 to 62 (VKDA…LVYY), 80 to 100 (TLWT…LAFG), 107 to 127 (LFKP…MWLI), 147 to 167 (SLLI…SRSA), 184 to 204 (TKFS…LNLV), 214 to 234 (IGLL…YLAI), and 249 to 269 (FAVY…TGVM).

It belongs to the UppP family.

Its subcellular location is the cell membrane. It catalyses the reaction di-trans,octa-cis-undecaprenyl diphosphate + H2O = di-trans,octa-cis-undecaprenyl phosphate + phosphate + H(+). In terms of biological role, catalyzes the dephosphorylation of undecaprenyl diphosphate (UPP). Confers resistance to bacitracin. The chain is Undecaprenyl-diphosphatase from Deinococcus deserti (strain DSM 17065 / CIP 109153 / LMG 22923 / VCD115).